Consider the following 337-residue polypeptide: Glycerol-3-phosphate dehydrogenase [NAD(P)+] 2 (337 aa).

Residues Thr-11, Trp-12, and Lys-105 each contribute to the NADPH site. Lys-105, Gly-139, and Thr-141 together coordinate sn-glycerol 3-phosphate. Ala-143 provides a ligand contact to NADPH. Sn-glycerol 3-phosphate-binding residues include Lys-194, Asp-247, Ser-257, Arg-258, and Asn-259. Lys-194 acts as the Proton acceptor in catalysis. Arg-258 is an NADPH binding site. Positions 282 and 284 each coordinate NADPH.

The protein belongs to the NAD-dependent glycerol-3-phosphate dehydrogenase family.

Its subcellular location is the cytoplasm. It catalyses the reaction sn-glycerol 3-phosphate + NAD(+) = dihydroxyacetone phosphate + NADH + H(+). The enzyme catalyses sn-glycerol 3-phosphate + NADP(+) = dihydroxyacetone phosphate + NADPH + H(+). It functions in the pathway membrane lipid metabolism; glycerophospholipid metabolism. Catalyzes the reduction of the glycolytic intermediate dihydroxyacetone phosphate (DHAP) to sn-glycerol 3-phosphate (G3P), the key precursor for phospholipid synthesis. The polypeptide is Glycerol-3-phosphate dehydrogenase [NAD(P)+] 2 (Lactobacillus delbrueckii subsp. bulgaricus (strain ATCC 11842 / DSM 20081 / BCRC 10696 / JCM 1002 / NBRC 13953 / NCIMB 11778 / NCTC 12712 / WDCM 00102 / Lb 14)).